We begin with the raw amino-acid sequence, 198 residues long: Phosphoheptose isomerase (198 aa).

The SIS domain occupies 40–198; that stretch reads IVTALRSGRK…IEAALMQDLS (159 aa). Residue 55-57 participates in substrate binding; it reads NGG. Zn(2+) contacts are provided by His-64 and Glu-68. Substrate-binding positions include Glu-68, 97 to 98, 123 to 125, Ser-128, and Gln-175; these read ND and STS. Zn(2+) contacts are provided by Gln-175 and His-183.

It belongs to the SIS family. GmhA subfamily. In terms of assembly, homotetramer. Zn(2+) serves as cofactor.

The protein resides in the cytoplasm. It carries out the reaction 2 D-sedoheptulose 7-phosphate = D-glycero-alpha-D-manno-heptose 7-phosphate + D-glycero-beta-D-manno-heptose 7-phosphate. The protein operates within carbohydrate biosynthesis; D-glycero-D-manno-heptose 7-phosphate biosynthesis; D-glycero-alpha-D-manno-heptose 7-phosphate and D-glycero-beta-D-manno-heptose 7-phosphate from sedoheptulose 7-phosphate: step 1/1. Catalyzes the isomerization of sedoheptulose 7-phosphate in D-glycero-D-manno-heptose 7-phosphate. This Bradyrhizobium sp. (strain BTAi1 / ATCC BAA-1182) protein is Phosphoheptose isomerase.